Here is a 173-residue protein sequence, read N- to C-terminus: Protein tyrosine phosphatase type IVA 3 (173 aa).

Positions Ala-8–Lys-161 constitute a Tyrosine-protein phosphatase domain. Cys-49 and Cys-104 form a disulfide bridge. The active-site Proton donor is Asp-72. Cys-104 (phosphocysteine intermediate) is an active-site residue. Arg-110 serves as a coordination point for substrate. Cys-170 is subject to Cysteine methyl ester. Cys-170 is lipidated: S-farnesyl cysteine. A propeptide spans Cys-171 to Met-173 (removed in mature form).

This sequence belongs to the protein-tyrosine phosphatase family. As to quaternary structure, interacts with tubulin. In terms of processing, farnesylated. Farnesylation is required for membrane targeting. In terms of tissue distribution, mainly expressed in cardiomyocytes and skeletal muscle; also found in pancreas. Consistently overexpressed in colon cancer metastasis.

It localises to the cell membrane. Its subcellular location is the early endosome. The enzyme catalyses O-phospho-L-tyrosyl-[protein] + H2O = L-tyrosyl-[protein] + phosphate. Its activity is regulated as follows. Inhibited by sodium orthovanadate and peroxovanadium compounds, and by pentamidine. Protein tyrosine phosphatase which stimulates progression from G1 into S phase during mitosis. Enhances cell proliferation, cell motility and invasive activity, and promotes cancer metastasis. May be involved in the progression of cardiac hypertrophy by inhibiting intracellular calcium mobilization in response to angiotensin II. The chain is Protein tyrosine phosphatase type IVA 3 (PTP4A3) from Homo sapiens (Human).